The chain runs to 123 residues: uncharacterized protein (123 aa).

Residues 5–25 (GTLVIIFAIVLILCIMLLFFY) form a helical membrane-spanning segment. Positions 32–53 (KSGVLPPPIPPPTPPPPKKKYD) are disordered. Positions 36–47 (LPPPIPPPTPPP) are enriched in pro residues.

It belongs to the asfivirus CP123L family.

It is found in the host membrane. It localises to the virion. This is an uncharacterized protein from Ornithodoros (relapsing fever ticks).